A 476-amino-acid polypeptide reads, in one-letter code: Serine/threonine-protein kinase Chk1 (476 aa).

The tract at residues 1 to 265 (MAVPFVEDWD…IPDIKKDRWY (265 aa)) is interaction with CLSPN. Positions 9–265 (WDLVQTLGEG…IPDIKKDRWY (257 aa)) constitute a Protein kinase domain. Residues 15-23 (LGEGAYGEV) and Lys-38 contribute to the ATP site. Asp-130 acts as the Proton acceptor in catalysis. Lys-132 is covalently cross-linked (Glycyl lysine isopeptide (Lys-Gly) (interchain with G-Cter in ubiquitin)). The interval 267–331 (KPLNRGAKRP…RTGLSLWDTG (65 aa)) is disordered. A Phosphoserine; by PKB/AKT1 modification is found at Ser-280. Positions 280–291 (SGGMSESSSGFS) are enriched in low complexity. Residues Ser-286, Ser-296, and Ser-301 each carry the phosphoserine modification. Residues 298–320 (LDFSPVNNGSSEETVKFSSSQPE) are compositionally biased toward polar residues. A Phosphoserine; by ATM and ATR modification is found at Ser-317. Ser-345 carries the phosphoserine; by ATR modification. Residues 391–476 (QCLKETFEKL…SSQKVWFPVT (86 aa)) form an autoinhibitory region region. Lys-436 is covalently cross-linked (Glycyl lysine isopeptide (Lys-Gly) (interchain with G-Cter in ubiquitin)). Ser-463, Ser-467, and Ser-468 each carry phosphoserine.

This sequence belongs to the protein kinase superfamily. CAMK Ser/Thr protein kinase family. NIM1 subfamily. In terms of assembly, interacts (phosphorylated by ATR) with RAD51. Interacts with and phosphorylates CLSPN, an adapter protein that regulates the ATR-dependent phosphorylation of CHEK1. Interacts with BRCA1. Interacts with and phosphorylates CDC25A, CDC25B and CDC25C. Interacts with FBXO6, which regulates CHEK1. Interacts with PPM1D, which regulates CHEK1 through dephosphorylation. Interacts with TIMELESS; DNA damage-dependent. Interacts with FEM1B; activates CHEK1 in response to stress. Interacts with TLK1. Interacts with XPO1 and YWHAZ. Interacts with CDK5RAP3; antagonizes CHEK1. Phosphorylated by ATR in a RAD17-dependent manner in response to ultraviolet irradiation and inhibition of DNA replication. Phosphorylated by ATM in response to ionizing irradiation. ATM and ATR can both phosphorylate Ser-317 and Ser-345 and this results in enhanced kinase activity. Phosphorylation at Ser-345 induces a change in the conformation of the protein, activates the kinase activity and is a prerequisite for interaction with FBXO6 and subsequent ubiquitination at Lys-436. Phosphorylation at Ser-345 also increases binding to 14-3-3 proteins and promotes nuclear retention. Conversely, dephosphorylation at Ser-345 by PPM1D may contribute to exit from checkpoint mediated cell cycle arrest. Phosphorylation at Ser-280 by AKT1/PKB, may promote mono and/or diubiquitination. Also phosphorylated at undefined residues during mitotic arrest, resulting in decreased activity. In terms of processing, ubiquitinated. Mono or diubiquitination promotes nuclear exclusion. The activated form (phosphorylated on Ser-345) is polyubiquitinated at Lys-436 by some SCF-type E3 ubiquitin ligase complex containing FBXO6 promoting its degradation. Ubiquitination and degradation are required to terminate the checkpoint and ensure that activated CHEK1 does not accumulate as cells progress through S phase, when replication forks encounter transient impediments during normal DNA replication. 'Lys-63'-mediated ubiquitination by TRAF4 at Lys-132 activates cell cycle arrest and activation of DNA repair. Post-translationally, proteolytically cleaved at the C-terminus by SPRTN during normal DNA replication, thereby promoting CHEK1 removal from chromatin and activating the protein kinase activity. As to expression, found in all adult tissues tested. Elevated expression in testis, lung and spleen. 15.5 day old embryos show ubiquitous expression with strong expression in brain, liver, kidney, pancreas, intestine, thymus and lung.

It localises to the nucleus. The protein localises to the chromosome. It is found in the cytoplasm. The protein resides in the cytoskeleton. Its subcellular location is the microtubule organizing center. It localises to the centrosome. It catalyses the reaction L-seryl-[protein] + ATP = O-phospho-L-seryl-[protein] + ADP + H(+). It carries out the reaction L-threonyl-[protein] + ATP = O-phospho-L-threonyl-[protein] + ADP + H(+). Its activity is regulated as follows. Activated through phosphorylation predominantly by ATR but also by ATM in response to DNA damage or inhibition of DNA replication. Activation is modulated by several mediators including CLSPN, BRCA1 and FEM1B. Proteolytic cleavage at the C-terminus by SPRTN during normal DNA replication activates the protein kinase activity. Functionally, serine/threonine-protein kinase which is required for checkpoint-mediated cell cycle arrest and activation of DNA repair in response to the presence of DNA damage or unreplicated DNA. May also negatively regulate cell cycle progression during unperturbed cell cycles. This regulation is achieved by a number of mechanisms that together help to preserve the integrity of the genome. Recognizes the substrate consensus sequence [R-X-X-S/T]. Binds to and phosphorylates CDC25A, CDC25B and CDC25C. Phosphorylation of CDC25A at 'Ser-178' and 'Thr-507' and phosphorylation of CDC25C at 'Ser-216' creates binding sites for 14-3-3 proteins which inhibit CDC25A and CDC25C. Phosphorylation of CDC25A at 'Ser-76', 'Ser-124', 'Ser-178', 'Ser-279' and 'Ser-293' promotes proteolysis of CDC25A. Phosphorylation of CDC25A at 'Ser-76' primes the protein for subsequent phosphorylation at 'Ser-79', 'Ser-82' and 'Ser-88' by NEK11, which is required for polyubiquitination and degradation of CDCD25A. Inhibition of CDC25 leads to increased inhibitory tyrosine phosphorylation of CDK-cyclin complexes and blocks cell cycle progression. Also phosphorylates NEK6. Binds to and phosphorylates RAD51 at 'Thr-309', which promotes the release of RAD51 from BRCA2 and enhances the association of RAD51 with chromatin, thereby promoting DNA repair by homologous recombination. Phosphorylates multiple sites within the C-terminus of TP53, which promotes activation of TP53 by acetylation and promotes cell cycle arrest and suppression of cellular proliferation. Also promotes repair of DNA cross-links through phosphorylation of FANCE. Binds to and phosphorylates TLK1 at 'Ser-743', which prevents the TLK1-dependent phosphorylation of the chromatin assembly factor ASF1A. This may enhance chromatin assembly both in the presence or absence of DNA damage. May also play a role in replication fork maintenance through regulation of PCNA. May regulate the transcription of genes that regulate cell-cycle progression through the phosphorylation of histones. Phosphorylates histone H3.1 (to form H3T11ph), which leads to epigenetic inhibition of a subset of genes. May also phosphorylate RB1 to promote its interaction with the E2F family of transcription factors and subsequent cell cycle arrest. Phosphorylates SPRTN, promoting SPRTN recruitment to chromatin. Reduces replication stress and activates the G2/M checkpoint, by phosphorylating and inactivating PABIR1/FAM122A and promoting the serine/threonine-protein phosphatase 2A-mediated dephosphorylation and stabilization of WEE1 levels and activity. The protein is Serine/threonine-protein kinase Chk1 (Chek1) of Mus musculus (Mouse).